Consider the following 430-residue polypeptide: Gamma-glutamyl phosphate reductase (430 aa).

Belongs to the gamma-glutamyl phosphate reductase family.

The protein localises to the cytoplasm. The enzyme catalyses L-glutamate 5-semialdehyde + phosphate + NADP(+) = L-glutamyl 5-phosphate + NADPH + H(+). It participates in amino-acid biosynthesis; L-proline biosynthesis; L-glutamate 5-semialdehyde from L-glutamate: step 2/2. In terms of biological role, catalyzes the NADPH-dependent reduction of L-glutamate 5-phosphate into L-glutamate 5-semialdehyde and phosphate. The product spontaneously undergoes cyclization to form 1-pyrroline-5-carboxylate. In Rhodopseudomonas palustris (strain BisB5), this protein is Gamma-glutamyl phosphate reductase.